Reading from the N-terminus, the 158-residue chain is Endoribonuclease YbeY (158 aa).

Zn(2+)-binding residues include histidine 121, histidine 125, and histidine 131.

The protein belongs to the endoribonuclease YbeY family. It depends on Zn(2+) as a cofactor.

The protein resides in the cytoplasm. In terms of biological role, single strand-specific metallo-endoribonuclease involved in late-stage 70S ribosome quality control and in maturation of the 3' terminus of the 16S rRNA. The chain is Endoribonuclease YbeY from Exiguobacterium sp. (strain ATCC BAA-1283 / AT1b).